Reading from the N-terminus, the 1418-residue chain is Alpha-latrotoxin-Lhe1a (1418 aa).

A signal peptide spans 1-20 (MIFVGETMERANHSLVRLRR). Residues 17–20 (RLRR) are furin-like endopeptidase recognition region. Positions 238-257 (VLYALLYGTQTYISVMFFLL) are helix H8 is the probable transmembrane region of the tetrameric pore inserted in the target cell membrane. C413 and C1066 are joined by a disulfide. ANK repeat units follow at residues 458–489 (LYNA…ATFD), 490–521 (QGRT…ELNQ), 525–554 (KGYT…SINS), 559–589 (FLQT…NINE), 593–622 (DGFT…DVNA), 626–656 (KGLT…DINA), 660–690 (NNMT…NANV), 695–723 (GLLS…NVNV), 729–758 (GGIT…NIEQ), 762–791 (EKYT…NFEA), 795–824 (SGAT…NWRD), 828–857 (NGQM…TVLD), 862–891 (NSDT…DINT), 895–924 (NGHA…NVYI), 928–957 (NGMN…KFEW), 971–1003 (EECA…GNFN), 1004–1033 (ICGP…SVDG), 1035–1064 (KTDT…KVNH), 1068–1097 (NGMT…DFRR), 1101–1131 (RGAT…DINI), 1137–1166 (DKET…DVTI), and 1170–1199 (YDKT…KFRR). The interval 1026–1032 (EEVLSVD) is 4C4.1 epitope. Residues 1196–1199 (KFRR) form a furin-like endopeptidase recognition region region. A propeptide spanning residues 1200–1418 (EYKSSYGEHS…SEKKIQKISI (219 aa)) is cleaved from the precursor.

It belongs to the cationic peptide 01 (latrotoxin) family. 03 (alpha-latrotoxin) subfamily. As to quaternary structure, homotetramer in membranes. In terms of processing, processed by furin-like proteases at both the N- and C-termini. Expressed in venom gland, cephalothorax, and abdomen tissues from both males and females.

The protein resides in the secreted. The protein localises to the target cell membrane. Presynaptic neurotoxin that causes massive release of neurotransmitters from vertebrate (but not invertebrate) nerve terminals and endocrine cells via a complex mechanism involving activation of receptor(s) and toxin insertion into the plasma membrane with subsequent pore formation. Binds to neurexin-1-alpha (NRXN1) in a calcium dependent manner, adhesion G protein-coupled receptor L1 (ADGRL1, also termed latrophilin-1 and calcium-independent receptor of latrotoxin (CIRL)), and receptor-type tyrosine-protein phosphatase S (PTPRS), also termed PTP sigma. NRXN1 and PTPRS are suggested to provide a platform for binding and subsequent pore formation events. In contrast, binding to ADGRL1 does not involve oligomerization and channel formation, but direct downstream stimulation of the synaptic fusion machinery. The sequence is that of Alpha-latrotoxin-Lhe1a from Latrodectus hesperus (Western black widow spider).